The sequence spans 169 residues: Mediator of RNA polymerase II transcription subunit 28 (169 aa).

Residues 1–35 are disordered; sequence MFSAQQPGPPPPNQPGAPAGLMSTPPGAKNPSSTL. Residues 99 to 137 are a coiled coil; the sequence is EQVIKEDVSELRNELQRKEALIQKHLTKLRSWQQVLEEI.

The protein belongs to the Mediator complex subunit 28 family. In terms of assembly, component of the Mediator complex.

The protein resides in the nucleus. In terms of biological role, component of the Mediator complex, a coactivator involved in the regulated transcription of nearly all RNA polymerase II-dependent genes. Mediator functions as a bridge to convey information from gene-specific regulatory proteins to the basal RNA polymerase II transcription machinery. Mediator is recruited to promoters by direct interactions with regulatory proteins and serves as a scaffold for the assembly of a functional preinitiation complex with RNA polymerase II and the general transcription factors. The sequence is that of Mediator of RNA polymerase II transcription subunit 28 (med28) from Xenopus tropicalis (Western clawed frog).